We begin with the raw amino-acid sequence, 682 residues long: Methionine--tRNA ligase (682 aa).

The short motif at 12–22 is the 'HIGH' region element; sequence PYANGAIHLGH. Residues Cys-143, Cys-146, Cys-156, and Cys-159 each coordinate Zn(2+). Positions 328–332 match the 'KMSKS' region motif; it reads KMSKS. Residue Lys-331 participates in ATP binding. The tRNA-binding domain maps to 580–682; the sequence is DFAKLDLRVA…EGIRPGMQVK (103 aa).

The protein belongs to the class-I aminoacyl-tRNA synthetase family. MetG type 1 subfamily. In terms of assembly, homodimer. Zn(2+) serves as cofactor.

It is found in the cytoplasm. The enzyme catalyses tRNA(Met) + L-methionine + ATP = L-methionyl-tRNA(Met) + AMP + diphosphate. Is required not only for elongation of protein synthesis but also for the initiation of all mRNA translation through initiator tRNA(fMet) aminoacylation. In Actinobacillus pleuropneumoniae serotype 7 (strain AP76), this protein is Methionine--tRNA ligase.